The sequence spans 293 residues: uncharacterized protein (293 aa).

Positions 1-58 constitute an HTH lysR-type domain; that stretch reads MQLQELHMLVVLAEELNMRKAAERLFVSQPALSQRLQTIEKAWGTKIFLRSQKGLTVT. Residues 18–37 constitute a DNA-binding region (H-T-H motif); it reads MRKAAERLFVSQPALSQRLQ.

The protein belongs to the LysR transcriptional regulatory family.

This is an uncharacterized protein from Bacillus subtilis (strain 168).